Consider the following 774-residue polypeptide: Ent-beyerene synthase KSL4, chloroplastic (774 aa).

The N-terminal 35 residues, 1-35, are a transit peptide targeting the chloroplast; it reads MLLGSTNTLRISSHGKEWEGKTLTGMPLGKVNQRV. The Mg(2+) site is built by aspartate 525, aspartate 529, asparagine 668, aspartate 669, threonine 672, and glutamate 676. The DDXXD motif motif lies at 525–529; that stretch reads DDFFD.

The protein belongs to the terpene synthase family. It depends on Mg(2+) as a cofactor.

The protein resides in the plastid. It localises to the chloroplast. The enzyme catalyses ent-copalyl diphosphate = ent-beyerene + diphosphate. It carries out the reaction ent-copalyl diphosphate = ent-atiserene + diphosphate. The catalysed reaction is ent-copalyl diphosphate = ent-kaur-16-ene + diphosphate. It participates in secondary metabolite biosynthesis; terpenoid biosynthesis. In terms of biological role, diterpene cyclase involved in the biosynthesis of labdane-related diterpenoids (LRDs) natural products. Catalyzes the cyclization of ent-CDP into ent-beyerene as a major and ent-kaurene and ent-atiserene as minor products. The sequence is that of Ent-beyerene synthase KSL4, chloroplastic from Ricinus communis (Castor bean).